A 117-amino-acid polypeptide reads, in one-letter code: Large ribosomal subunit protein uL18 (117 aa).

Belongs to the universal ribosomal protein uL18 family. As to quaternary structure, part of the 50S ribosomal subunit; part of the 5S rRNA/L5/L18/L25 subcomplex. Contacts the 5S and 23S rRNAs.

In terms of biological role, this is one of the proteins that bind and probably mediate the attachment of the 5S RNA into the large ribosomal subunit, where it forms part of the central protuberance. This chain is Large ribosomal subunit protein uL18, found in Sphingopyxis alaskensis (strain DSM 13593 / LMG 18877 / RB2256) (Sphingomonas alaskensis).